The following is a 150-amino-acid chain: Depactin (150 aa).

Positions 3-148 constitute an ADF-H domain; the sequence is SGTALDENVK…SEEAIGDKIK (146 aa).

This sequence belongs to the actin-binding proteins ADF family.

Depactin interacts with actin at some of its 12 N-terminal residues and 20 C-terminal residues. Binds to actin monomers from filaments and in solution. The sequence is that of Depactin from Asterias amurensis (Northern Pacific seastar).